The chain runs to 149 residues: D-aminoacyl-tRNA deacylase (149 aa).

A Gly-cisPro motif, important for rejection of L-amino acids motif is present at residues 137–138 (GP).

It belongs to the DTD family. As to quaternary structure, homodimer.

The protein resides in the cytoplasm. The catalysed reaction is glycyl-tRNA(Ala) + H2O = tRNA(Ala) + glycine + H(+). The enzyme catalyses a D-aminoacyl-tRNA + H2O = a tRNA + a D-alpha-amino acid + H(+). Functionally, an aminoacyl-tRNA editing enzyme that deacylates mischarged D-aminoacyl-tRNAs. Also deacylates mischarged glycyl-tRNA(Ala), protecting cells against glycine mischarging by AlaRS. Acts via tRNA-based rather than protein-based catalysis; rejects L-amino acids rather than detecting D-amino acids in the active site. By recycling D-aminoacyl-tRNA to D-amino acids and free tRNA molecules, this enzyme counteracts the toxicity associated with the formation of D-aminoacyl-tRNA entities in vivo and helps enforce protein L-homochirality. In Clostridium perfringens (strain ATCC 13124 / DSM 756 / JCM 1290 / NCIMB 6125 / NCTC 8237 / Type A), this protein is D-aminoacyl-tRNA deacylase.